A 543-amino-acid chain; its full sequence is MAKGEGAESGSAAGLLPTSILQSTERPAQVKKEPKKKKQQLSVCNKLCYALGGAPYQVTGCALGFFLQIYLLDVAQKDEEVVFCFSSFQVGPFSASIILFVGRAWDAITDPLVGLCISKSPWTCLGRLMPWIIFSTPLAVIAYFLIWFVPDFPHGQTYWYLLFYCLFETMVTCFHVPYSALTMFISTEQTERDSATAYRMTVEVLGTVLGTAIQGQIVGQADTPCFQDLNSSTVASQSANHTHGTTSHRETQKAYLLAAGVIVCIYIICAVILILGVREQREPYEAQQSEPIAYFRGLRLVMSHGPYIKLITGFLFTSLAFMLVEGNFVLFCTYTLGFRNEFQNLLLAIMLSATLTIPIWQWFLTRFGKKTAVYVGISSAVPFLILVALMESNLIITYAVAVAAGISVAAAFLLPWSMLPDVIDDFHLKQPHFHGTEPIFFSFYVFFTKFASGVSLGISTLSLDFAGYQTRGCSQPERVKFTLNMLVTMAPIVLILLGLLLFKMYPIDEERRRQNKKALQALRDEASSSGCSETDSTELASIL.

Low complexity predominate over residues 1-14; sequence MAKGEGAESGSAAG. A disordered region spans residues 1–34; that stretch reads MAKGEGAESGSAAGLLPTSILQSTERPAQVKKEP. The Cytoplasmic segment spans residues 1–40; that stretch reads MAKGEGAESGSAAGLLPTSILQSTERPAQVKKEPKKKKQQ. A helical membrane pass occupies residues 41–70; it reads LSVCNKLCYALGGAPYQVTGCALGFFLQIY. At 71-94 the chain is on the extracellular side; it reads LLDVAQKDEEVVFCFSSFQVGPFS. The helical transmembrane segment at 95 to 115 threads the bilayer; sequence ASIILFVGRAWDAITDPLVGL. The Cytoplasmic segment spans residues 116 to 127; the sequence is CISKSPWTCLGR. The helical transmembrane segment at 128–147 threads the bilayer; sequence LMPWIIFSTPLAVIAYFLIW. At 148–157 the chain is on the extracellular side; sequence FVPDFPHGQT. The chain crosses the membrane as a helical span at residues 158–182; the sequence is YWYLLFYCLFETMVTCFHVPYSALT. The Cytoplasmic segment spans residues 183–189; that stretch reads MFISTEQ. A helical membrane pass occupies residues 190 to 221; it reads TERDSATAYRMTVEVLGTVLGTAIQGQIVGQA. Over 222–241 the chain is Extracellular; that stretch reads DTPCFQDLNSSTVASQSANH. A disulfide bond links Cys-225 and Cys-473. 2 N-linked (GlcNAc...) asparagine glycosylation sites follow: Asn-230 and Asn-240. A helical membrane pass occupies residues 242–275; that stretch reads THGTTSHRETQKAYLLAAGVIVCIYIICAVILIL. Topologically, residues 276 to 306 are cytoplasmic; sequence GVREQREPYEAQQSEPIAYFRGLRLVMSHGP. Residues 307–333 form a helical membrane-spanning segment; it reads YIKLITGFLFTSLAFMLVEGNFVLFCT. Residues 334–344 are Extracellular-facing; sequence YTLGFRNEFQN. Residues 345–363 traverse the membrane as a helical segment; the sequence is LLLAIMLSATLTIPIWQWF. Topologically, residues 364-367 are cytoplasmic; it reads LTRF. A helical membrane pass occupies residues 368 to 389; sequence GKKTAVYVGISSAVPFLILVAL. The Extracellular segment spans residues 390–392; it reads MES. Residues 393–429 traverse the membrane as a helical segment; it reads NLIITYAVAVAAGISVAAAFLLPWSMLPDVIDDFHLK. Over 430–439 the chain is Cytoplasmic; the sequence is QPHFHGTEPI. Residues 440–466 traverse the membrane as a helical segment; the sequence is FFSFYVFFTKFASGVSLGISTLSLDFA. Over 467 to 478 the chain is Extracellular; the sequence is GYQTRGCSQPER. A helical membrane pass occupies residues 479–502; it reads VKFTLNMLVTMAPIVLILLGLLLF. Topologically, residues 503-543 are cytoplasmic; that stretch reads KMYPIDEERRRQNKKALQALRDEASSSGCSETDSTELASIL.

It belongs to the major facilitator superfamily. As to quaternary structure, interacts with ERVFRD-1/syncytin-2. As to expression, in placenta, associated with trophoblast cells.

Its subcellular location is the cell membrane. The protein localises to the endoplasmic reticulum membrane. It carries out the reaction a 1-acyl-sn-glycero-3-phosphocholine(in) + Na(+)(in) = a 1-acyl-sn-glycero-3-phosphocholine(out) + Na(+)(out). The enzyme catalyses 1-(4Z,7Z,10Z,13Z,16Z,19Z-docosahexaenoyl)-sn-glycero-3-phosphocholine(in) + Na(+)(in) = 1-(4Z,7Z,10Z,13Z,16Z,19Z-docosahexaenoyl)-sn-glycero-3-phosphocholine(out) + Na(+)(out). The catalysed reaction is 1-(9Z-octadecenoyl)-sn-glycero-3-phosphocholine(in) + Na(+)(in) = 1-(9Z-octadecenoyl)-sn-glycero-3-phosphocholine(out) + Na(+)(out). It catalyses the reaction 1-hexadecanoyl-sn-glycero-3-phosphocholine(in) + Na(+)(in) = 1-hexadecanoyl-sn-glycero-3-phosphocholine(out) + Na(+)(out). It carries out the reaction a 1-acyl-sn-glycero-3-phosphoethanolamine(in) + Na(+)(in) = a 1-acyl-sn-glycero-3-phosphoethanolamine(out) + Na(+)(out). Functionally, sodium-dependent lysophosphatidylcholine (LPC) symporter, which plays an essential role for blood-brain barrier formation and function. Specifically expressed in endothelium of the blood-brain barrier of micro-vessels and transports LPC into the brain. Transport of LPC is essential because it constitutes the major mechanism by which docosahexaenoic acid (DHA), an omega-3 fatty acid that is essential for normal brain growth and cognitive function, enters the brain. Transports LPC carrying long-chain fatty acids such LPC oleate and LPC palmitate with a minimum acyl chain length of 14 carbons. Does not transport docosahexaenoic acid in unesterified fatty acid. Specifically required for blood-brain barrier formation and function, probably by mediating lipid transport. Not required for central nervous system vascular morphogenesis. Acts as a transporter for tunicamycin, an inhibitor of asparagine-linked glycosylation. In placenta, acts as a receptor for ERVFRD-1/syncytin-2 and is required for trophoblast fusion. In Homo sapiens (Human), this protein is Sodium-dependent lysophosphatidylcholine symporter 1.